The primary structure comprises 188 residues: Transcription factor FapR (188 aa).

Belongs to the FapR family.

Functionally, transcriptional factor involved in regulation of membrane lipid biosynthesis by repressing genes involved in fatty acid and phospholipid metabolism. This chain is Transcription factor FapR, found in Bacillus licheniformis (strain ATCC 14580 / DSM 13 / JCM 2505 / CCUG 7422 / NBRC 12200 / NCIMB 9375 / NCTC 10341 / NRRL NRS-1264 / Gibson 46).